The chain runs to 379 residues: Chaperone protein DnaJ (379 aa).

In terms of domain architecture, J spans 5–70 (DYYEVLGVSR…QKRAAYDQYG (66 aa)). The CR-type zinc-finger motif lies at 134 to 212 (GVTKEIRIPT…CHGHGRVEKS (79 aa)). Residues Cys-147, Cys-150, Cys-164, Cys-167, Cys-186, Cys-189, Cys-200, and Cys-203 each coordinate Zn(2+). CXXCXGXG motif repeat units follow at residues 147–154 (CDVCHGSG), 164–171 (CPTCHGAG), 186–193 (CPHCHGRG), and 200–207 (CNKCHGHG).

It belongs to the DnaJ family. As to quaternary structure, homodimer. Zn(2+) is required as a cofactor.

Its subcellular location is the cytoplasm. Functionally, participates actively in the response to hyperosmotic and heat shock by preventing the aggregation of stress-denatured proteins and by disaggregating proteins, also in an autonomous, DnaK-independent fashion. Unfolded proteins bind initially to DnaJ; upon interaction with the DnaJ-bound protein, DnaK hydrolyzes its bound ATP, resulting in the formation of a stable complex. GrpE releases ADP from DnaK; ATP binding to DnaK triggers the release of the substrate protein, thus completing the reaction cycle. Several rounds of ATP-dependent interactions between DnaJ, DnaK and GrpE are required for fully efficient folding. Also involved, together with DnaK and GrpE, in the DNA replication of plasmids through activation of initiation proteins. The protein is Chaperone protein DnaJ of Yersinia pseudotuberculosis serotype O:1b (strain IP 31758).